Here is a 319-residue protein sequence, read N- to C-terminus: Urease accessory protein UreD (319 aa).

The segment at 284–319 (RLSTPQPPREWPLQEEGTFSNERFTKDHQSPSASPH) is disordered.

This sequence belongs to the UreD family. As to quaternary structure, ureD, UreF and UreG form a complex that acts as a GTP-hydrolysis-dependent molecular chaperone, activating the urease apoprotein by helping to assemble the nickel containing metallocenter of UreC. The UreE protein probably delivers the nickel.

It localises to the cytoplasm. Required for maturation of urease via the functional incorporation of the urease nickel metallocenter. This chain is Urease accessory protein UreD, found in Prochlorococcus marinus (strain MIT 9313).